Here is a 43-residue protein sequence, read N- to C-terminus: Potassium channel toxin gamma-KTx 3.3 (43 aa).

Cystine bridges form between cysteine 5–cysteine 23, cysteine 11–cysteine 34, cysteine 20–cysteine 39, and cysteine 24–cysteine 41.

It belongs to the ergtoxin family. Gamma-KTx 3 subfamily. Expressed by the venom gland.

It localises to the secreted. In terms of biological role, blocks Kv11/ERG potassium channels. The sequence is that of Potassium channel toxin gamma-KTx 3.3 from Centruroides sculpturatus (Arizona bark scorpion).